A 159-amino-acid polypeptide reads, in one-letter code: Peptide methionine sulfoxide reductase MsrB (159 aa).

A MsrB domain is found at 22–144; that stretch reads RERLEANLTA…NSVSLQFVKA (123 aa). Cys-61, Cys-64, Cys-110, and Cys-113 together coordinate Zn(2+). The active-site Nucleophile is Cys-133.

Belongs to the MsrB Met sulfoxide reductase family. The cofactor is Zn(2+).

The catalysed reaction is L-methionyl-[protein] + [thioredoxin]-disulfide + H2O = L-methionyl-(R)-S-oxide-[protein] + [thioredoxin]-dithiol. This is Peptide methionine sulfoxide reductase MsrB from Caulobacter vibrioides (strain ATCC 19089 / CIP 103742 / CB 15) (Caulobacter crescentus).